We begin with the raw amino-acid sequence, 266 residues long: Undecaprenyl-diphosphatase 3 (266 aa).

8 helical membrane passes run 4 to 24, 43 to 63, 86 to 106, 109 to 129, 145 to 165, 186 to 206, 219 to 239, and 246 to 266; these read IEAFKALFLGFIEGLTEFLPI, SGRAFEVVIQLGAILAVCWLY, FSVLMAFFPAVIIGVLAVDFI, VLFSPLVVAIALIIGGLIIFW, ITFKQAIAVGFIQCLAMIPGT, TEFSFFLAMPTMLGAATYDLL, NIGLGFITAFISALFVVKALV, and TLRVFAWYRIVLGIIIMFVML.

It belongs to the UppP family.

It localises to the cell inner membrane. It catalyses the reaction di-trans,octa-cis-undecaprenyl diphosphate + H2O = di-trans,octa-cis-undecaprenyl phosphate + phosphate + H(+). Catalyzes the dephosphorylation of undecaprenyl diphosphate (UPP). Confers resistance to bacitracin. This Acinetobacter baylyi (strain ATCC 33305 / BD413 / ADP1) protein is Undecaprenyl-diphosphatase 3.